Consider the following 35-residue polypeptide: Cupiennin-1b (35 aa).

Glutamic acid 1-amide is present on E35.

The protein belongs to the cationic peptide 04 (cupiennin) family. 01 subfamily. As to expression, expressed by the venom gland.

The protein localises to the secreted. In terms of biological role, has antimicrobial activity against E.coli, E.faecalis, P.aeruginosa, and S.aureus. Has insecticidal and hemolytic activities. Probably acts by disturbing membrane function with its amphipathic structure. The chain is Cupiennin-1b from Cupiennius salei (American wandering spider).